We begin with the raw amino-acid sequence, 281 residues long: Bis(5'-nucleosyl)-tetraphosphatase, symmetrical (281 aa).

This sequence belongs to the Ap4A hydrolase family.

It catalyses the reaction P(1),P(4)-bis(5'-adenosyl) tetraphosphate + H2O = 2 ADP + 2 H(+). Functionally, hydrolyzes diadenosine 5',5'''-P1,P4-tetraphosphate to yield ADP. This is Bis(5'-nucleosyl)-tetraphosphatase, symmetrical from Acidovorax sp. (strain JS42).